The chain runs to 619 residues: Serine/threonine-protein kinase pkn1 (619 aa).

The region spanning 15 to 302 is the Protein kinase domain; it reads YRILYRKGQS…SSQNLPQAVL (288 aa). An ATP-binding site is contributed by 21 to 29; that stretch reads KGQSLWSED. The Proton acceptor role is filled by Glu-141.

The protein belongs to the protein kinase superfamily. Ser/Thr protein kinase family. Autophosphorylated on serine and threonine residues.

The catalysed reaction is L-seryl-[protein] + ATP = O-phospho-L-seryl-[protein] + ADP + H(+). It catalyses the reaction L-threonyl-[protein] + ATP = O-phospho-L-threonyl-[protein] + ADP + H(+). Functionally, together with the serine/threonine kinase PknD, may play a role in the specific interactions with host proteins during intracellular growth. The chain is Serine/threonine-protein kinase pkn1 (pkn1) from Chlamydia pneumoniae (Chlamydophila pneumoniae).